We begin with the raw amino-acid sequence, 294 residues long: MSEVKVSAKMVKELRDRTGLGMMECKKALEESNGDVETAIDNLRKSGQAKAAKKAGNIAADGAIIIAQGESKAFLLEVNCQTDFVAKDENFTAFAETVANIALENNVTDVAAIAELPYGNDQTVEEARVSLVQKIGENIQIRRVEVLEGANIAAYRHGLRIGVVVSYEGGSAETGKNLAMHIAAFNPVAIDDEDVAADLLAREKDIIEAKARESGKPDNIVEKMIEGGLRKYLEEVTLLRQSYVMDNEKKVGDVLKAEGVKVLGFKRLEVGEGIEKKQEDFAAEVAATQALANK.

Positions 82–85 are involved in Mg(2+) ion dislocation from EF-Tu; that stretch reads TDFV.

The protein belongs to the EF-Ts family.

Its subcellular location is the cytoplasm. Its function is as follows. Associates with the EF-Tu.GDP complex and induces the exchange of GDP to GTP. It remains bound to the aminoacyl-tRNA.EF-Tu.GTP complex up to the GTP hydrolysis stage on the ribosome. The sequence is that of Elongation factor Ts from Psychrobacter arcticus (strain DSM 17307 / VKM B-2377 / 273-4).